Consider the following 342-residue polypeptide: Sesquiterpene synthase MBR_09977 (342 aa).

Mg(2+) is bound by residues Asp-91 and Asp-96. A DDXXXD motif motif is present at residues 91-96; it reads DDLFVD. Arg-184 provides a ligand contact to substrate. Positions 230, 234, and 238 each coordinate Mg(2+).

It belongs to the terpene synthase family. The cofactor is Mg(2+).

It carries out the reaction (2E,6E)-farnesyl diphosphate + H2O = (+)-corvol ether B + diphosphate. The catalysed reaction is (2E,6E)-farnesyl diphosphate + H2O = (+)-corvol ether A + diphosphate. In terms of biological role, terpene synthase that catalyzes the conversion of (2E,6E)-farnesyl diphosphate (FPP) into sesquiterpenes which are important for fungi-environment interactions. Produces a mixture consisting of 8 sesquiterpenes including corvol ethers A and B, as well as traces of epizonarene, gamma-cadinene, delta-cadinene, alpha-cadinene, alpha-cadinol, and an unidentified sesquiterpene. The major product is corvol ether A. The chain is Sesquiterpene synthase MBR_09977 from Metarhizium brunneum (strain ARSEF 3297).